The chain runs to 61 residues: Metallothionein-1 (61 aa).

M1 bears the N-acetylmethionine mark. Residues 1-29 form a beta region; it reads MDPNCSCSTGGSCTCTSSCACKNCKCTSC. Residues C5, C7, C13, C15, C19, C21, C24, C26, C29, C33, C34, C36, C37, C41, C44, C48, C50, C57, C59, and C60 each contribute to the a divalent metal cation site. Residues 30–61 form an alpha region; sequence KKSCCSCCPVGCSKCAQGCVCKGAADKCTCCA.

This sequence belongs to the metallothionein superfamily. Type 1 family.

In terms of biological role, metallothioneins have a high content of cysteine residues that bind various heavy metals; these proteins are transcriptionally regulated by both heavy metals and glucocorticoids. This Mus musculus (Mouse) protein is Metallothionein-1 (Mt1).